The primary structure comprises 586 residues: Protein HOL1 (586 aa).

At 1–66 (MDKYTNRDHP…NWSSWRKLAH (66 aa)) the chain is on the extracellular side. A helical membrane pass occupies residues 67–87 (FGLMAFITAFTAATSNDAGAA). Residues 88–103 (QDSLNEIYGISYDSMN) are Cytoplasmic-facing. A helical membrane pass occupies residues 104–124 (TGAGVLFLGIGWSTLFLAPFA). The Extracellular segment spans residues 125 to 130 (NLYGRK). The chain crosses the membrane as a helical span at residues 131–151 (ITYIVCTTLGLFGALWFALAK). Topologically, residues 152 to 189 (RTSDTIWSQLFVGISESCAEAQVQLSLSDIFFQHQLGS) are cytoplasmic. Residues 190–210 (VLTVYIMCTSIGTFLGPLIAG) form a helical membrane-spanning segment. At 211–219 (YISAFTNFR) the chain is on the extracellular side. A helical transmembrane segment spans residues 220 to 240 (WVGWVAVIISGGLLITIIFGC). Residues 241–362 (EETYFDRGQY…YFKYLKINLR (122 aa)) are Cytoplasmic-facing. The chain crosses the membrane as a helical span at residues 363–383 (MFLFPPVWLSGMFWGIQDVFL). Topologically, residues 384–413 (TFYLTTQESAYYEPPWNYSDFGVAIMNVPT) are extracellular. A helical membrane pass occupies residues 414–434 (LIGAVIGCICAGIVSDYFVLW). The Cytoplasmic segment spans residues 435–448 (MARHNRGILEAEFR). The chain crosses the membrane as a helical span at residues 449–469 (LYFSIATAIIGPAGLLMFGIG). The Extracellular segment spans residues 470–477 (TARQWPWQ). Residues 478 to 498 (AIYVGLGFVGFAWGCSGDIAM) traverse the membrane as a helical segment. Topologically, residues 499–508 (AYLMDCYPDM) are cytoplasmic. Residues 509–529 (VLEGMVCTAIINNTISCIFTF) traverse the membrane as a helical segment. The Extracellular portion of the chain corresponds to 530-544 (TCSDWLAASGTENTY). Residues 545 to 565 (IALAVINFGITAFALPMYYYG) traverse the membrane as a helical segment. Residues 566–586 (KRIRLWTKRWYLQSVNLRDGV) lie on the Cytoplasmic side of the membrane.

The protein resides in the membrane. Seems to be involved in the uptake of several cations and of histidinol. The protein is Protein HOL1 (HOL1) of Saccharomyces cerevisiae (strain ATCC 204508 / S288c) (Baker's yeast).